A 342-amino-acid chain; its full sequence is Flagellar P-ring protein (342 aa).

A signal peptide spans 1–19 (MKRVFLWLIFVLAFHKLLA).

The protein belongs to the FlgI family. The basal body constitutes a major portion of the flagellar organelle and consists of four rings (L,P,S, and M) mounted on a central rod.

The protein resides in the periplasm. It localises to the bacterial flagellum basal body. Assembles around the rod to form the L-ring and probably protects the motor/basal body from shearing forces during rotation. This is Flagellar P-ring protein from Helicobacter pylori (strain P12).